The chain runs to 295 residues: G1/S-specific cyclin-D1 (295 aa).

One can recognise a Cyclin N-terminal domain in the interval 28–152; the sequence is LRAMLKAEET…LLVNKLKWNL (125 aa). Residues 262 to 295 are disordered; sequence AQQNMDPKAAEEEEEEEEEVDLACTPTDVRDVDI. Lys269 is covalently cross-linked (Glycyl lysine isopeptide (Lys-Gly) (interchain with G-Cter in ubiquitin)). The segment covering 272-282 has biased composition (acidic residues); it reads EEEEEEEEEVD. Thr286 carries the phosphothreonine modification.

This sequence belongs to the cyclin family. Cyclin D subfamily. As to quaternary structure, interacts with either CDK4 or CDK6 protein kinase to form a serine/threonine kinase holoenzyme complex. The cyclin subunit imparts substrate specificity to the complex. Component of the ternary complex CCND1/CDK4/CDKN1B required for nuclear translocation and modulation of CDK4-mediated kinase activity. Interacts directly with CDKN1B. Can form similar complexes with either CDKN1A or CDKN2A. Interacts with UHRF2; the interaction ubiquitinates CCND1 and appears to occur independently of phosphorylation. Interacts with USP2. Interacts (via cyclin N-terminal domain) with INSM1 (via N-terminal region); the interaction competes with the binding of CCND1 to CDK4 during cell cycle progression and inhibits CDK4 activity. Interacts with CDK4; the interaction is prevented with the binding of CCND1 to INSM1 during cell cycle progression. In terms of processing, phosphorylation at Thr-286 by MAP kinases is required for ubiquitination and degradation by the DCX(AMBRA1) complex. It also plays an essential role for recognition by the FBXO31 component of SCF (SKP1-cullin-F-box) protein ligase complex following DNA damage. Post-translationally, ubiquitinated at Lys-269 by the DCX(AMBRA1) complex during the transition from G1 to S cell phase, leading to its degradation: ubiquitination is dependent on Thr-286 phosphorylation. The DCX(AMBRA1) complex represents the major regulator of CCND1 stability during the G1/S transition. Also ubiquitinated by the SCF(FBXO4) and Cul7-RING(FBXW8) ubiquitin-protein ligase complexes. Following DNA damage it is ubiquitinated by the SCF(FBXO31) protein ligase complex. SCF(FBXO31) ubiquitination is dependent on Thr-286 phosphorylation. Ubiquitinated also by UHRF2 apparently in a phosphorylation-independent manner. Ubiquitination leads to its degradation and G1 arrest. Deubiquitinated by USP2; leading to its stabilization.

The protein resides in the nucleus. Its subcellular location is the cytoplasm. The protein localises to the nucleus membrane. Functionally, regulatory component of the cyclin D1-CDK4 (DC) complex that phosphorylates and inhibits members of the retinoblastoma (RB) protein family including RB1 and regulates the cell-cycle during G(1)/S transition. Phosphorylation of RB1 allows dissociation of the transcription factor E2F from the RB/E2F complex and the subsequent transcription of E2F target genes which are responsible for the progression through the G(1) phase. Hypophosphorylates RB1 in early G(1) phase. Cyclin D-CDK4 complexes are major integrators of various mitogenenic and antimitogenic signals. Also a substrate for SMAD3, phosphorylating SMAD3 in a cell-cycle-dependent manner and repressing its transcriptional activity. Component of the ternary complex, cyclin D1/CDK4/CDKN1B, required for nuclear translocation and activity of the cyclin D-CDK4 complex. Exhibits transcriptional corepressor activity with INSM1 on the NEUROD1 and INS promoters in a cell cycle-independent manner. This chain is G1/S-specific cyclin-D1, found in Homo sapiens (Human).